Reading from the N-terminus, the 183-residue chain is Microfibrillar-associated protein 2 (183 aa).

The segment at residues 1-16 is a signal peptide (or 18); it reads MRAACLFLLFMPGLLA. Gln17 is subject to Pyrrolidone carboxylic acid. Sulfotyrosine is present on residues Tyr46, Tyr47, and Tyr49. The interval 52 to 92 is disordered; that stretch reads VSPRTPEEQFQSQQQVQQEVIPAPTPEPAAAGDLETEPTEP. Residues 59–70 are compositionally biased toward low complexity; it reads EQFQSQQQVQQE. In terms of domain architecture, ShKT spans 153 to 183; sequence CRDKFSKCGVMAVSGLCQSVAASCARSCGGC. Disulfide bonds link Cys153-Cys183, Cys160-Cys176, and Cys169-Cys180.

It belongs to the MFAP family. As to quaternary structure, forms a ternary complex with BGN and ELN. Interacts with FBN1 (via N-terminal domain) and FBN2. Forms intermolecular disulfide bonds either with other MAGP-1 molecules or with other components of the microfibrils. May form transglutaminase cross-links. Post-translationally, O-glycosylated.

It localises to the secreted. The protein localises to the extracellular space. The protein resides in the extracellular matrix. In terms of biological role, component of the elastin-associated microfibrils. The chain is Microfibrillar-associated protein 2 (Mfap2) from Mus musculus (Mouse).